A 595-amino-acid chain; its full sequence is Aspartate--tRNA(Asp/Asn) ligase (595 aa).

An L-aspartate-binding site is contributed by E175. Residues Q199–K202 are aspartate. Residues R221 and H454 each contribute to the L-aspartate site. ATP is bound at residue R221 to E223. E488 is a binding site for ATP. An L-aspartate-binding site is contributed by R495. Residue G540–R543 coordinates ATP.

This sequence belongs to the class-II aminoacyl-tRNA synthetase family. Type 1 subfamily. As to quaternary structure, homodimer.

Its subcellular location is the cytoplasm. It catalyses the reaction tRNA(Asx) + L-aspartate + ATP = L-aspartyl-tRNA(Asx) + AMP + diphosphate. Aspartyl-tRNA synthetase with relaxed tRNA specificity since it is able to aspartylate not only its cognate tRNA(Asp) but also tRNA(Asn). Reaction proceeds in two steps: L-aspartate is first activated by ATP to form Asp-AMP and then transferred to the acceptor end of tRNA(Asp/Asn). The polypeptide is Aspartate--tRNA(Asp/Asn) ligase (Brucella canis (strain ATCC 23365 / NCTC 10854 / RM-666)).